Consider the following 414-residue polypeptide: Enolase (414 aa).

A (2R)-2-phosphoglycerate-binding site is contributed by glutamine 156. Glutamate 200 acts as the Proton donor in catalysis. The Mg(2+) site is built by aspartate 236, glutamate 281, and aspartate 308. (2R)-2-phosphoglycerate contacts are provided by lysine 333, arginine 362, serine 363, and lysine 384. The active-site Proton acceptor is lysine 333.

Belongs to the enolase family. The cofactor is Mg(2+).

It is found in the cytoplasm. It localises to the secreted. Its subcellular location is the cell surface. It catalyses the reaction (2R)-2-phosphoglycerate = phosphoenolpyruvate + H2O. The protein operates within carbohydrate degradation; glycolysis; pyruvate from D-glyceraldehyde 3-phosphate: step 4/5. Functionally, catalyzes the reversible conversion of 2-phosphoglycerate (2-PG) into phosphoenolpyruvate (PEP). It is essential for the degradation of carbohydrates via glycolysis. This Methanosphaera stadtmanae (strain ATCC 43021 / DSM 3091 / JCM 11832 / MCB-3) protein is Enolase.